Here is a 225-residue protein sequence, read N- to C-terminus: Glutathione S-transferase U3 (225 aa).

The 81-residue stretch at 6-86 folds into the GST N-terminal domain; sequence EGVKLIGSWA…YIDQTWTNNP (81 aa). Residues 16–17, 43–44, 57–58, and 70–71 each bind glutathione; these read SP, VK, KV, and ES. The 128-residue stretch at 91 to 218 folds into the GST C-terminal domain; sequence SPYDKAMARF…EKHIEHMMKI (128 aa). The residue at position 152 (T152) is a Phosphothreonine.

Belongs to the GST superfamily. Tau family.

The protein localises to the cytoplasm. Its subcellular location is the cytosol. The enzyme catalyses RX + glutathione = an S-substituted glutathione + a halide anion + H(+). Functionally, may be involved in the conjugation of reduced glutathione to a wide number of exogenous and endogenous hydrophobic electrophiles and have a detoxification role against certain herbicides. In Arabidopsis thaliana (Mouse-ear cress), this protein is Glutathione S-transferase U3 (GSTU3).